Here is a 236-residue protein sequence, read N- to C-terminus: Cyclin-P3-1 (236 aa).

The protein belongs to the cyclin family. Cyclin U/P subfamily.

The chain is Cyclin-P3-1 (CYCP3-1) from Oryza sativa subsp. japonica (Rice).